Consider the following 649-residue polypeptide: tRNA-guanine(15) transglycosylase (649 aa).

Asp88 serves as the catalytic Nucleophile. Asp123 and Ala194 together coordinate substrate. Zn(2+) contacts are provided by Cys280, Cys282, and Cys285. The 76-residue stretch at 573 to 648 folds into the PUA domain; sequence KYRIVIDSSV…VAATLRGGLK (76 aa).

The protein belongs to the archaeosine tRNA-ribosyltransferase family. Zn(2+) is required as a cofactor.

It carries out the reaction guanosine(15) in tRNA + 7-cyano-7-deazaguanine = 7-cyano-7-carbaguanosine(15) in tRNA + guanine. It functions in the pathway tRNA modification; archaeosine-tRNA biosynthesis. In terms of biological role, exchanges the guanine residue with 7-cyano-7-deazaguanine (preQ0) at position 15 in the dihydrouridine loop (D-loop) of archaeal tRNAs. The polypeptide is tRNA-guanine(15) transglycosylase (Methanococcus maripaludis (strain DSM 14266 / JCM 13030 / NBRC 101832 / S2 / LL)).